The following is a 546-amino-acid chain: MTTRYIFVTGGVVSSLGKGIAAASLAAILEARGLNVTIMKLDPYINVDPGTMSPTQHGEVFVTEDGAETDLDLGHYERFIRTKMNRRNNFTTGRIYEEVLRKERRGDYLGATIQVIPHITNAIKEKVLAGGEGHDVAIVEIGGTVGDIESLPFLESIRQLGVELGRDRTLFMHLTLVPFLGAAGEVKTKPTQHSVKELRSIGIAPDVLVCRGDRAIPANEKAKISLFCNVEERAVISLKDVDSIYKIPALLKAQGLDQLVTKRFGIDCKEADLAEWEKVVYQEANPVGEVTIGMVGKYIELPDAYKSVNEALKHAGLFNRVSVNIKYIDSQNVEAKGDEVLQGLDGILVPGGFGERGVEGKIMAAKFARENNLPYFGICLGMQVALIEFARHVAGLEGAHSTEFKPETPHPVVGLITEWINEDGQVEERHEESDLGGTMRLGAQLCHLEEGTKAAAAYKSTTCVERHRHRYEVNNNYKERLEKAGLIFSGLSSDRSLVEMIELPNHPWFVAGQFHPEFTSTPRDGQPLFEGFVAAAAAYQKRDLED.

Residues 1–266 (MTTRYIFVTG…DQLVTKRFGI (266 aa)) are amidoligase domain. Residue Ser-14 coordinates CTP. Ser-14 serves as a coordination point for UTP. ATP is bound by residues 15–20 (SLGKGI) and Asp-72. Positions 72 and 140 each coordinate Mg(2+). CTP-binding positions include 147–149 (DIE), 187–192 (KTKPTQ), and Lys-223. UTP contacts are provided by residues 187–192 (KTKPTQ) and Lys-223. Residue 239-241 (KDV) participates in ATP binding. Positions 291-542 (TIGMVGKYIE…VAAAAAYQKR (252 aa)) constitute a Glutamine amidotransferase type-1 domain. Gly-352 contacts L-glutamine. The active-site Nucleophile; for glutamine hydrolysis is the Cys-379. L-glutamine-binding positions include 380–383 (LGMQ), Glu-403, and Arg-470. Residues His-515 and Glu-517 contribute to the active site.

This sequence belongs to the CTP synthase family. Homotetramer.

It carries out the reaction UTP + L-glutamine + ATP + H2O = CTP + L-glutamate + ADP + phosphate + 2 H(+). The enzyme catalyses L-glutamine + H2O = L-glutamate + NH4(+). It catalyses the reaction UTP + NH4(+) + ATP = CTP + ADP + phosphate + 2 H(+). Its pathway is pyrimidine metabolism; CTP biosynthesis via de novo pathway; CTP from UDP: step 2/2. Allosterically activated by GTP, when glutamine is the substrate; GTP has no effect on the reaction when ammonia is the substrate. The allosteric effector GTP functions by stabilizing the protein conformation that binds the tetrahedral intermediate(s) formed during glutamine hydrolysis. Inhibited by the product CTP, via allosteric rather than competitive inhibition. Catalyzes the ATP-dependent amination of UTP to CTP with either L-glutamine or ammonia as the source of nitrogen. Regulates intracellular CTP levels through interactions with the four ribonucleotide triphosphates. In Shewanella pealeana (strain ATCC 700345 / ANG-SQ1), this protein is CTP synthase.